Here is a 259-residue protein sequence, read N- to C-terminus: MIEQFFRPDSVEQALELKRRYQDEAVWFAGGSKLNATPTRTDKKIAISLQDLELDWVDWDNGALRIGAMSRLQPLRDARFIPAALREALGFVYSRHVRNQSTIGGEIAARQEESVLLPVLLALDAELVFGNGETLSIEDYLACPCDRLLTEIIIKDPYRTCATRKISRSQAGLTVVTAAVAMTDHDGMRIALDGVASKALRLHDVEKQNLEGNALEQAVANAIFPQEDLRGSVAYKRYITGVLVADLYADCQQAGEEAV.

The 159-residue stretch at 1 to 159 (MIEQFFRPDS…TEIIIKDPYR (159 aa)) folds into the FAD-binding PCMH-type domain.

This is an uncharacterized protein from Escherichia coli O157:H7.